The following is a 379-amino-acid chain: Succinyl-diaminopimelate desuccinylase (379 aa).

His-70 contacts Zn(2+). Residue Asp-72 is part of the active site. A Zn(2+)-binding site is contributed by Asp-103. Glu-137 (proton acceptor) is an active-site residue. Zn(2+)-binding residues include Glu-138, Glu-166, and His-352.

Belongs to the peptidase M20A family. DapE subfamily. Homodimer. Requires Zn(2+) as cofactor. Co(2+) serves as cofactor.

It catalyses the reaction N-succinyl-(2S,6S)-2,6-diaminopimelate + H2O = (2S,6S)-2,6-diaminopimelate + succinate. The protein operates within amino-acid biosynthesis; L-lysine biosynthesis via DAP pathway; LL-2,6-diaminopimelate from (S)-tetrahydrodipicolinate (succinylase route): step 3/3. Functionally, catalyzes the hydrolysis of N-succinyl-L,L-diaminopimelic acid (SDAP), forming succinate and LL-2,6-diaminopimelate (DAP), an intermediate involved in the bacterial biosynthesis of lysine and meso-diaminopimelic acid, an essential component of bacterial cell walls. This is Succinyl-diaminopimelate desuccinylase from Burkholderia cenocepacia (strain ATCC BAA-245 / DSM 16553 / LMG 16656 / NCTC 13227 / J2315 / CF5610) (Burkholderia cepacia (strain J2315)).